Reading from the N-terminus, the 417-residue chain is Serine hydroxymethyltransferase (417 aa).

Residues Leu121 and 125 to 127 (GHL) each bind (6S)-5,6,7,8-tetrahydrofolate. Lys229 is subject to N6-(pyridoxal phosphate)lysine. A (6S)-5,6,7,8-tetrahydrofolate-binding site is contributed by 355 to 357 (SPF).

The protein belongs to the SHMT family. In terms of assembly, homodimer. Pyridoxal 5'-phosphate is required as a cofactor.

It is found in the cytoplasm. It carries out the reaction (6R)-5,10-methylene-5,6,7,8-tetrahydrofolate + glycine + H2O = (6S)-5,6,7,8-tetrahydrofolate + L-serine. It participates in one-carbon metabolism; tetrahydrofolate interconversion. Its pathway is amino-acid biosynthesis; glycine biosynthesis; glycine from L-serine: step 1/1. Catalyzes the reversible interconversion of serine and glycine with tetrahydrofolate (THF) serving as the one-carbon carrier. This reaction serves as the major source of one-carbon groups required for the biosynthesis of purines, thymidylate, methionine, and other important biomolecules. Also exhibits THF-independent aldolase activity toward beta-hydroxyamino acids, producing glycine and aldehydes, via a retro-aldol mechanism. This is Serine hydroxymethyltransferase from Salmonella arizonae (strain ATCC BAA-731 / CDC346-86 / RSK2980).